The primary structure comprises 416 residues: UDP-N-acetylglucosamine 1-carboxyvinyltransferase (416 aa).

Residue 22-23 (KN) participates in phosphoenolpyruvate binding. UDP-N-acetyl-alpha-D-glucosamine is bound at residue arginine 92. Residue cysteine 116 is the Proton donor of the active site. Residue cysteine 116 is modified to 2-(S-cysteinyl)pyruvic acid O-phosphothioketal. UDP-N-acetyl-alpha-D-glucosamine contacts are provided by aspartate 304 and isoleucine 326.

It belongs to the EPSP synthase family. MurA subfamily.

It localises to the cytoplasm. The enzyme catalyses phosphoenolpyruvate + UDP-N-acetyl-alpha-D-glucosamine = UDP-N-acetyl-3-O-(1-carboxyvinyl)-alpha-D-glucosamine + phosphate. Its pathway is cell wall biogenesis; peptidoglycan biosynthesis. In terms of biological role, cell wall formation. Adds enolpyruvyl to UDP-N-acetylglucosamine. The sequence is that of UDP-N-acetylglucosamine 1-carboxyvinyltransferase from Solidesulfovibrio magneticus (strain ATCC 700980 / DSM 13731 / RS-1) (Desulfovibrio magneticus).